The following is a 676-amino-acid chain: DNA ligase (676 aa).

NAD(+)-binding positions include 35–39, 84–85, and Glu118; these read DYEFD and SL. The active-site N6-AMP-lysine intermediate is Lys120. Arg141, Glu184, Lys299, and Lys323 together coordinate NAD(+). Zn(2+) is bound by residues Cys417, Cys420, Cys435, and Cys441. One can recognise a BRCT domain in the interval 600-676; sequence LINRNFEGVN…ISEDEFNAML (77 aa).

It belongs to the NAD-dependent DNA ligase family. LigA subfamily. Mg(2+) serves as cofactor. Mn(2+) is required as a cofactor.

It catalyses the reaction NAD(+) + (deoxyribonucleotide)n-3'-hydroxyl + 5'-phospho-(deoxyribonucleotide)m = (deoxyribonucleotide)n+m + AMP + beta-nicotinamide D-nucleotide.. DNA ligase that catalyzes the formation of phosphodiester linkages between 5'-phosphoryl and 3'-hydroxyl groups in double-stranded DNA using NAD as a coenzyme and as the energy source for the reaction. It is essential for DNA replication and repair of damaged DNA. The protein is DNA ligase of Chlorobium phaeobacteroides (strain DSM 266 / SMG 266 / 2430).